The following is a 238-amino-acid chain: IkB-like protein (238 aa).

4 ANK repeats span residues G48–H80, G87–C118, G124–K153, and G158–M187. Residues H80–D86 carry the Nuclear localization signal motif. The Nuclear localization signal signature appears at K202–K213. The PxIxITxC motif; Interaction with host PPP3CA signature appears at P205–C212. Residues F227 to V230 carry the FLCV motif motif.

The protein belongs to the asfivirus A238L family. Interacts with host PPIA. Interacts with host PPP3CA/Calcineurin. Interacts with host RELA/p65; interaction of the 32 kDa form with host RELA results in the formation of a stable complex with NF-kappa-B. Interacts with host PPP3R1. Interacts with host EP300; this interaction inhibits the association of host EP300 with host RELA, JUN and NFATC2. Post-translationally, the protein exists in a 28 kDa and a 32 kDa form, probably due to post-translational modifications which are neither phosphorylation, nor sumoylation.

The protein localises to the host nucleus. The protein resides in the host cytoplasm. Functionally, ikB-like protein that inhibits the binding of NF-kappa-B to DNA, thereby downregulating pro-inflammatory cytokine production. Forms a heterodimer with the NF-kappa-B subunit RELA/p65 and prevents the activation of the NF-kappa-B transcription factor. Inhibits calcineurin function, which is required for the induction of nuclear factor of activated T cells (NFAT)-dependent immune response genes. Prevents the binding of substrates to calcineurin without affecting the phosphatase activity. Does not contain the serine residues that are phosphorylated by host IkB kinase and thus is not degraded following stimulation of the NFkB pathway. The protein is IkB-like protein (A238L) of Ornithodoros (relapsing fever ticks).